The sequence spans 596 residues: (E)-beta-ocimene synthase, chloroplastic (596 aa).

Residues Met1–Arg35 constitute a chloroplast transit peptide. Arg307, Asp344, Asp348, Arg485, and Asn488 together coordinate (2E)-geranyl diphosphate. Asp344 and Asp348 together coordinate Mg(2+). The DDXXD motif motif lies at Asp344–Asp348. Positions 488, 492, and 496 each coordinate Mg(2+).

The protein belongs to the terpene synthase family. Tpsb subfamily. Requires Mg(2+) as cofactor. The cofactor is Mn(2+). In terms of tissue distribution, highly expressed in leaves, stems and disk florets. Detected in roots.

The protein localises to the plastid. It localises to the chloroplast. The enzyme catalyses (2E)-geranyl diphosphate = (E)-beta-ocimene + diphosphate. It functions in the pathway secondary metabolite biosynthesis; terpenoid biosynthesis. Monoterpene synthase involved in the biosynthesis of (E)-beta-ocimene as the major product and trace amounts of (Z)-beta-ocimene. Can only accept geranyl diphosphate as substrate. The polypeptide is (E)-beta-ocimene synthase, chloroplastic (Matricaria chamomilla var. recutita (German chamomile)).